The following is a 131-amino-acid chain: Small ribosomal subunit protein uS11 (131 aa).

This sequence belongs to the universal ribosomal protein uS11 family. As to quaternary structure, part of the 30S ribosomal subunit. Interacts with proteins S7 and S18. Binds to IF-3.

Functionally, located on the platform of the 30S subunit, it bridges several disparate RNA helices of the 16S rRNA. Forms part of the Shine-Dalgarno cleft in the 70S ribosome. In Deinococcus radiodurans (strain ATCC 13939 / DSM 20539 / JCM 16871 / CCUG 27074 / LMG 4051 / NBRC 15346 / NCIMB 9279 / VKM B-1422 / R1), this protein is Small ribosomal subunit protein uS11.